The following is a 563-amino-acid chain: MANNGTILKISRSLKNAVSAILQGYGDGQEPVTETSAELHRLCGCLELLLQFDQKEQRSFLGARKDYWDFLFTALRRHRGYTEQMSFICSQDKLKTSLGKGRAFIRLCLARGQLAESMQLCLLNPQLTREWYGPRSPLLCAELQEDILDSLYALNGVAFNLDLQRPDLDEAWPMFSESRCSSPSRTGKRRPGKPKGFPEEVRCSRGEQLQEPDTGGTSCLQDATREDRTPDLCKPLQPSHLPTFLEEKREDSRSLSCPQSTWETEREGFQLDQKDGGPKPRKFLENSTASIQQQRSRAKDVKMQLTGRKVEGKGSLSGTEDQRTTEGIQKRAADWDLGQGLMAPGLQGREDAELGYRCEWNQPDVLRQSWVLGTKKSSPTEKPQEWTGVTSGTMQEDGSEVPLQQEVIKDPGYGLQLAKEQAQCQEQLRAQEAELQALQEQLSRCQKERALLQVKLEQKQQEAERRDAMYQTELEGQRDLVQAMKRRVLELIHEKDLQWQRLQQLSTVAPGHCIGCNKVFRRLSRRYPCRLCGGLVCHACSVDYKKRERCCPTCAQQEEIQDT.

The region spanning 33-166 (TETSAELHRL…VAFNLDLQRP (134 aa)) is the RUN domain. 2 disordered regions span residues 176 to 327 (SESR…TTEG) and 375 to 397 (KKSS…MQED). 2 stretches are compositionally biased toward basic and acidic residues: residues 196–205 (GFPEEVRCSR) and 263–284 (ETER…RKFL). Over residues 285–295 (ENSTASIQQQR) the composition is skewed to polar residues. Basic and acidic residues predominate over residues 297 to 312 (RAKDVKMQLTGRKVEG). Positions 385-396 (EWTGVTSGTMQE) are enriched in polar residues. Residues 421–462 (QAQCQEQLRAQEAELQALQEQLSRCQKERALLQVKLEQKQQE) adopt a coiled-coil conformation. The FYVE-type zinc finger occupies 428–558 (LRAQEAELQA…RCCPTCAQQE (131 aa)). Zn(2+) is bound by residues Cys-513, Cys-516, Cys-529, Cys-532, Cys-537, Cys-540, Cys-551, and Cys-554.

In terms of assembly, forms homodimers (via coiled coil domain). Forms a ternary complex with RAB7A and LAMP2; the interaction with RAB7A is mediated by RUFY4 (via RUN and coiled coil domains). Interacts with GTP-, but not GDP-bound ARL8A and ARL8B. Interacts with dynactin/DCTN1 and the dynein intermediate chain DYNC1I1/2. As to expression, expressed in dendritic cells.

It is found in the cytoplasmic vesicle. It localises to the autophagosome. The protein localises to the lysosome. In terms of biological role, ARL8 effector that promotes the coupling of endolysosomes to dynein-dynactin for retrograde transport along microtubules. Acts by binding both GTP-bound ARL8 and dynein-dynactin. In nonneuronal cells, promotes concentration of endolysosomes in the juxtanuclear area. In hippocampal neurons, drives retrograde transport of endolysosomes from the axon to the soma. Positive regulator of macroautophagy in dendritic cells. Increases autophagic flux, probably by stimulating both autophagosome formation and facilitating tethering with lysosomes. Binds to phosphatidylinositol 3-phosphate (PtdIns3P) through its FYVE-type zinc finger. Positive regulator of osteosclast bone-resorbing activity, possibly by promoting late endosome-lysosome fusion by acting as an adapter protein between RAB7A on late endosomes and LAMP2 on primary lysosomes. This chain is RUN and FYVE domain-containing protein 4 (Rufy4), found in Mus musculus (Mouse).